The primary structure comprises 291 residues: Verruculogen synthase (291 aa).

Tyr-68 is a catalytic residue.

This sequence belongs to the PhyH family. As to quaternary structure, homodimer. Requires Fe cation as cofactor.

The enzyme catalyses fumitremorgin B + 2-oxoglutarate + AH2 + 2 O2 = verruculogen + succinate + A + CO2 + H2O. It functions in the pathway mycotoxin biosynthesis. In terms of biological role, verruculogen synthase; part of the gene cluster that mediates the biosynthesis of fumitremorgins, indole alkaloids that carry not only intriguing chemical structures, but also interesting biological and pharmacological activities. The biosynthesis of fumitremorgin-type alkaloids begins by condensation of the two amino acids L-tryptophan and L-proline to brevianamide F, catalyzed by the non-ribosomal peptide synthetase ftmA. Brevianamide F is then prenylated by the prenyltransferase ftmPT1/ftmB in the presence of dimethylallyl diphosphate, resulting in the formation of tryprostatin B. The three cytochrome P450 monooxygenases, ftmP450-1/ftmC, ftmP450-2/ftmE and ftmP450-3/FtmG, are responsible for the conversion of tryprostatin B to 6-hydroxytryprostatin B, tryprostatin A to fumitremorgin C and fumitremorgin C to 12,13-dihydroxyfumitremorgin C, respectively. The putative methyltransferase ftmMT/ftmD is expected for the conversion of 6-hydroxytryprostatin B to tryprostatin A. FtmPT2/FtmH catalyzes the prenylation of 12,13-dihydroxyfumitre-morgin C in the presence of dimethylallyl diphosphate, resulting in the formation of fumitremorgin B. Fumitremorgin B is further converted to verruculogen by ftmOx1/ftmF via the insertion of an endoperoxide bond between the two prenyl moieties. In some fungal species, verruculogen is further converted to fumitremorgin A, but the enzymes involved in this step have not been identified yet. The sequence is that of Verruculogen synthase from Aspergillus fumigatus (Neosartorya fumigata).